The chain runs to 190 residues: Threonylcarbamoyl-AMP synthase (190 aa).

In terms of domain architecture, YrdC-like spans threonine 7 to glycine 190.

It belongs to the SUA5 family. TsaC subfamily.

Its subcellular location is the cytoplasm. It catalyses the reaction L-threonine + hydrogencarbonate + ATP = L-threonylcarbamoyladenylate + diphosphate + H2O. Its function is as follows. Required for the formation of a threonylcarbamoyl group on adenosine at position 37 (t(6)A37) in tRNAs that read codons beginning with adenine. Catalyzes the conversion of L-threonine, HCO(3)(-)/CO(2) and ATP to give threonylcarbamoyl-AMP (TC-AMP) as the acyladenylate intermediate, with the release of diphosphate. This chain is Threonylcarbamoyl-AMP synthase, found in Salmonella arizonae (strain ATCC BAA-731 / CDC346-86 / RSK2980).